Here is a 362-residue protein sequence, read N- to C-terminus: uncharacterized protein (362 aa).

Basic and acidic residues predominate over residues 314-323 (GEEKEPKQES). Positions 314–362 (GEEKEPKQESQEQLFNPFTIDEMLTEEQQQQQEEENNATEEEGDTVKLG) are disordered. Residues 345–356 (QEEENNATEEEG) show a composition bias toward acidic residues.

This is an uncharacterized protein from Acidianus two-tailed virus (ATV).